A 223-amino-acid chain; its full sequence is Type II restriction enzyme BglII (223 aa).

Residues aspartate 84 and valine 94 each contribute to the Mg(2+) site.

In terms of assembly, homodimer. Mg(2+) is required as a cofactor.

The catalysed reaction is Endonucleolytic cleavage of DNA to give specific double-stranded fragments with terminal 5'-phosphates.. Its function is as follows. A P subtype restriction enzyme that recognizes the double-stranded sequence 5'-AGATCT-3' and cleaves after A-1. This is Type II restriction enzyme BglII (bglIIR) from Bacillus subtilis.